We begin with the raw amino-acid sequence, 260 residues long: NAD-capped RNA hydrolase NudC (260 aa).

Arginine 69 is a binding site for substrate. Zn(2+) contacts are provided by cysteine 98 and cysteine 101. Glutamate 111 lines the substrate pocket. Zn(2+)-binding residues include cysteine 116 and cysteine 119. Tyrosine 124 serves as a coordination point for substrate. A Nudix hydrolase domain is found at 125–248 (PQIAPCIIVA…TVARRLIEDT (124 aa)). A divalent metal cation-binding residues include alanine 158, glutamate 174, and glutamate 178. The Nudix box signature appears at 159–180 (GFVEVGETLEQTVVREVMEESQ). 192–199 (QPWPFPHS) is a substrate binding site. Glutamate 219 is a binding site for a divalent metal cation. Alanine 241 contacts substrate.

It belongs to the Nudix hydrolase family. NudC subfamily. Homodimer. Mg(2+) is required as a cofactor. Requires Mn(2+) as cofactor. Zn(2+) serves as cofactor.

The catalysed reaction is a 5'-end NAD(+)-phospho-ribonucleoside in mRNA + H2O = a 5'-end phospho-adenosine-phospho-ribonucleoside in mRNA + beta-nicotinamide D-ribonucleotide + 2 H(+). It carries out the reaction NAD(+) + H2O = beta-nicotinamide D-ribonucleotide + AMP + 2 H(+). The enzyme catalyses NADH + H2O = reduced beta-nicotinamide D-ribonucleotide + AMP + 2 H(+). Functionally, mRNA decapping enzyme that specifically removes the nicotinamide adenine dinucleotide (NAD) cap from a subset of mRNAs by hydrolyzing the diphosphate linkage to produce nicotinamide mononucleotide (NMN) and 5' monophosphate mRNA. The NAD-cap is present at the 5'-end of some mRNAs and stabilizes RNA against 5'-processing. Has preference for mRNAs with a 5'-end purine. Catalyzes the hydrolysis of a broad range of dinucleotide pyrophosphates. The protein is NAD-capped RNA hydrolase NudC of Pectobacterium carotovorum subsp. carotovorum (strain PC1).